Here is a 231-residue protein sequence, read N- to C-terminus: 5'-methylthioadenosine/S-adenosylhomocysteine nucleosidase (231 aa).

The active-site Proton acceptor is the Glu12. Substrate contacts are provided by residues Gly78, Met153, and 174–175 (ME). Asp198 functions as the Proton donor in the catalytic mechanism.

This sequence belongs to the PNP/UDP phosphorylase family. MtnN subfamily.

It carries out the reaction S-adenosyl-L-homocysteine + H2O = S-(5-deoxy-D-ribos-5-yl)-L-homocysteine + adenine. It catalyses the reaction S-methyl-5'-thioadenosine + H2O = 5-(methylsulfanyl)-D-ribose + adenine. The enzyme catalyses 5'-deoxyadenosine + H2O = 5-deoxy-D-ribose + adenine. It participates in amino-acid biosynthesis; L-methionine biosynthesis via salvage pathway; S-methyl-5-thio-alpha-D-ribose 1-phosphate from S-methyl-5'-thioadenosine (hydrolase route): step 1/2. In terms of biological role, catalyzes the irreversible cleavage of the glycosidic bond in both 5'-methylthioadenosine (MTA) and S-adenosylhomocysteine (SAH/AdoHcy) to adenine and the corresponding thioribose, 5'-methylthioribose and S-ribosylhomocysteine, respectively. Also cleaves 5'-deoxyadenosine, a toxic by-product of radical S-adenosylmethionine (SAM) enzymes, into 5-deoxyribose and adenine. This Bacillus cytotoxicus (strain DSM 22905 / CIP 110041 / 391-98 / NVH 391-98) protein is 5'-methylthioadenosine/S-adenosylhomocysteine nucleosidase.